A 578-amino-acid chain; its full sequence is Matrix metalloproteinase-17 (578 aa).

2 disordered regions span residues 1-22 (MGRR…PGPG) and 107-133 (PRCS…TKWS). The N-terminal stretch at 1–39 (MGRRPRGPGSPRGPGPPRPGPGLPPLLLVLALAAHGGCA) is a signal peptide. A compositionally biased stretch (pro residues) spans 11–22 (PRGPGPPRPGPG). The propeptide occupies 40–124 (APAPRAEDLS…PPGAQSRRKR (85 aa)). The Cysteine switch signature appears at 107 to 114 (PRCSLPDL). Cysteine 109 serves as a coordination point for Zn(2+). Asparagine 136 carries an N-linked (GlcNAc...) asparagine glycan. Histidine 247 contacts Zn(2+). Residue glutamate 248 is part of the active site. Histidine 251 and histidine 257 together coordinate Zn(2+). The tract at residues 301 to 334 (PTAQLDTPEPEEPPLLPEPPNNRSSTPPQKDVPH) is disordered. N-linked (GlcNAc...) asparagine glycosylation occurs at asparagine 322. Hemopexin repeat units lie at residues 333 to 382 (PHRC…WRGL), 386 to 432 (LDSV…SLPP), 436 to 479 (DAVF…WRGV), and 480 to 527 (PSML…WLVC). A disulfide bridge connects residues cysteine 336 and cysteine 527. Serine 558 carries the GPI-anchor amidated serine lipid modification. Positions 559-578 (DAHRLALPSLLLLTPLLWGL) are cleaved as a propeptide — removed in mature form.

This sequence belongs to the peptidase M10A family. Zn(2+) is required as a cofactor. It depends on Ca(2+) as a cofactor. Post-translationally, the precursor is cleaved by a furin endopeptidase. As to expression, expressed by monocytes and macrophages.

The protein localises to the cell membrane. The protein resides in the secreted. It localises to the extracellular space. Its subcellular location is the extracellular matrix. Its function is as follows. Endopeptidase that degrades various components of the extracellular matrix, such as fibrin. May be involved in the activation of membrane-bound precursors of growth factors or inflammatory mediators, such as tumor necrosis factor-alpha. May also be involved in tumoral process. Not obvious if able to proteolytically activate progelatinase A. Does not hydrolyze collagen types I, II, III, IV and V, gelatin, fibronectin, laminin, decorin nor alpha1-antitrypsin. This Mus musculus (Mouse) protein is Matrix metalloproteinase-17 (Mmp17).